The sequence spans 332 residues: Ferredoxin--NADP reductase 2 (332 aa).

7 residues coordinate FAD: glutamate 37, glutamine 45, tyrosine 50, valine 90, phenylalanine 124, aspartate 285, and threonine 326.

The protein belongs to the ferredoxin--NADP reductase type 2 family. Homodimer. Requires FAD as cofactor.

The catalysed reaction is 2 reduced [2Fe-2S]-[ferredoxin] + NADP(+) + H(+) = 2 oxidized [2Fe-2S]-[ferredoxin] + NADPH. The chain is Ferredoxin--NADP reductase 2 (yumC) from Bacillus subtilis (strain 168).